The following is a 146-amino-acid chain: Anti-sigma F factor (146 aa).

This sequence belongs to the anti-sigma-factor family.

It carries out the reaction L-seryl-[protein] + ATP = O-phospho-L-seryl-[protein] + ADP + H(+). The catalysed reaction is L-threonyl-[protein] + ATP = O-phospho-L-threonyl-[protein] + ADP + H(+). Its function is as follows. Binds to sigma F and blocks its ability to form an RNA polymerase holoenzyme (E-sigma F). Phosphorylates SpoIIAA on a serine residue. This phosphorylation may enable SpoIIAA to act as an anti-anti-sigma factor that counteracts SpoIIAB and thus releases sigma F from inhibition. This is Anti-sigma F factor from Halalkalibacterium halodurans (strain ATCC BAA-125 / DSM 18197 / FERM 7344 / JCM 9153 / C-125) (Bacillus halodurans).